We begin with the raw amino-acid sequence, 183 residues long: ADP-ribosylation factor-like protein 1 (183 aa).

Residue glycine 2 is the site of N-myristoyl glycine attachment. GTP contacts are provided by residues 25–32 (GLDGAGKT), 68–72 (DLGGQ), and 127–130 (NKQD).

Belongs to the small GTPase superfamily. Arf family. In terms of assembly, homodimer. Interacts with IMH1 (via GRIP domain); the interaction is dependent on GTP. Interacts with MON2.

It is found in the golgi apparatus. Its function is as follows. Recruits golgins such as IMH1 to the Golgi. Can bind and hydrolyze GTP. May be involved in trafficking events within the endosomal system. The sequence is that of ADP-ribosylation factor-like protein 1 (ARL1) from Saccharomyces cerevisiae (strain ATCC 204508 / S288c) (Baker's yeast).